We begin with the raw amino-acid sequence, 345 residues long: S-adenosylmethionine:tRNA ribosyltransferase-isomerase (345 aa).

The protein belongs to the QueA family. Monomer.

Its subcellular location is the cytoplasm. It carries out the reaction 7-aminomethyl-7-carbaguanosine(34) in tRNA + S-adenosyl-L-methionine = epoxyqueuosine(34) in tRNA + adenine + L-methionine + 2 H(+). It functions in the pathway tRNA modification; tRNA-queuosine biosynthesis. Functionally, transfers and isomerizes the ribose moiety from AdoMet to the 7-aminomethyl group of 7-deazaguanine (preQ1-tRNA) to give epoxyqueuosine (oQ-tRNA). This Shewanella sp. (strain W3-18-1) protein is S-adenosylmethionine:tRNA ribosyltransferase-isomerase.